The sequence spans 488 residues: Alpha-ketoglutaric semialdehyde dehydrogenase (488 aa).

NAD(+)-binding positions include lysine 180 and 233–238 (GSNQVG). Glutamate 255 (proton acceptor) is an active-site residue. Cysteine 289 functions as the Nucleophile in the catalytic mechanism. Glutamine 336 and glutamate 390 together coordinate NAD(+).

Belongs to the aldehyde dehydrogenase family. In terms of assembly, homotetramer.

It carries out the reaction 2,5-dioxopentanoate + NADP(+) + H2O = 2-oxoglutarate + NADPH + 2 H(+). The enzyme catalyses 2,5-dioxopentanoate + NAD(+) + H2O = 2-oxoglutarate + NADH + 2 H(+). Catalyzes the NAD(P)(+)-dependent oxidation of alpha-ketoglutaric semialdehyde (alphaKGSA) to alpha-ketoglutarate. Prefers NADP(+) to NAD(+) as a cosubstrate. In vitro, can also use various aldehydes. The protein is Alpha-ketoglutaric semialdehyde dehydrogenase of Bacillus subtilis (strain 168).